We begin with the raw amino-acid sequence, 396 residues long: Putative transposase y4rJ (396 aa).

The protein belongs to the transposase 20 family.

This chain is Putative transposase y4rJ, found in Sinorhizobium fredii (strain NBRC 101917 / NGR234).